We begin with the raw amino-acid sequence, 200 residues long: NAD(P)H-dependent FMN reductase C4B3.06c (200 aa).

FMN-binding positions include Arg22, 96-99, and Tyr126; that span reads QYNG.

Homodimer.

It localises to the cytoplasm. The protein resides in the nucleus. The catalysed reaction is FMNH2 + NADP(+) = FMN + NADPH + 2 H(+). It carries out the reaction FMNH2 + NAD(+) = FMN + NADH + 2 H(+). In terms of biological role, has several reductase activities that are NAD(P)H-dependent and involve FMN as a cofactor. May be involved in ferric iron assimilation. This is NAD(P)H-dependent FMN reductase C4B3.06c from Schizosaccharomyces pombe (strain 972 / ATCC 24843) (Fission yeast).